The chain runs to 399 residues: Methylthioribose kinase (399 aa).

ATP contacts are provided by residues Asn-40, Lys-57, and 111-113; that span reads EDL. Residue Asp-229 participates in substrate binding. 246-248 is an ATP binding site; it reads DAE. Arg-344 contributes to the substrate binding site.

This sequence belongs to the methylthioribose kinase family. In terms of assembly, homodimer.

It carries out the reaction 5-(methylsulfanyl)-D-ribose + ATP = 5-(methylsulfanyl)-alpha-D-ribose 1-phosphate + ADP + H(+). Its pathway is amino-acid biosynthesis; L-methionine biosynthesis via salvage pathway; S-methyl-5-thio-alpha-D-ribose 1-phosphate from S-methyl-5'-thioadenosine (hydrolase route): step 2/2. Functionally, catalyzes the phosphorylation of methylthioribose into methylthioribose-1-phosphate. This chain is Methylthioribose kinase, found in Yersinia enterocolitica serotype O:8 / biotype 1B (strain NCTC 13174 / 8081).